Here is a 628-residue protein sequence, read N- to C-terminus: (+)-alpha pinene synthase 1, chloroplastic (628 aa).

A chloroplast-targeting transit peptide spans 1–18 (MALVSAVPLNSKLCLCRT). Asp379, Asp383, and Asp531 together coordinate Mg(2+). The DDXXD motif motif lies at 379 to 383 (DDIYD).

This sequence belongs to the terpene synthase family. Tpsd subfamily. It depends on Mg(2+) as a cofactor. The cofactor is Mn(2+).

It is found in the plastid. The protein localises to the chloroplast. It carries out the reaction (2E)-geranyl diphosphate = (1R,5R)-alpha-pinene + diphosphate. The protein operates within terpene metabolism; oleoresin biosynthesis. It functions in the pathway secondary metabolite biosynthesis; terpenoid biosynthesis. Monoterpene synthase (TPS) involved in the biosynthesis of monoterpene natural products included in conifer oleoresin secretions and volatile emissions; these compounds contribute to biotic and abiotic stress defense against herbivores and pathogens. Catalyzes the conversion of (2E)-geranyl diphosphate (GPP) to (+)-alpha-pinene. The protein is (+)-alpha pinene synthase 1, chloroplastic of Pinus banksiana (Jack pine).